We begin with the raw amino-acid sequence, 250 residues long: Testis-expressed protein 101 (250 aa).

Residues 1–25 form the signal peptide; the sequence is MGACRIQYILLVFLLIASHWTLVQN. Residues N45, N110, N134, and N160 are each glycosylated (N-linked (GlcNAc...) asparagine). One can recognise a UPAR/Ly6 domain in the interval 141 to 215; that stretch reads CPTCLALEPC…VKETCSYQSF (75 aa). G224 carries the GPI-anchor amidated glycine lipid modification. Positions 225-250 are cleaved as a propeptide — removed in mature form; that stretch reads ASWMPTSLWVLELLLPALSLPLIYFP.

Interacts with VAMP3. Interacts with LY6K. Interacts with DPEP3; co-localized on the cell surface of spermatocytes, spermatids, and testicular spermatozoa, co-localized only in cytoplasmic droplets of caput and corpus epididymal sperm. Interacts with ADAM5. Post-translationally, N-glycosylated; by high mannose and/or biantennary complex and/or certain types of hybrid oligosaccharides; possesses different oligosaccharides chains according to its subcellular localization in the testis. Sheds from membrane raft by ACE and released from the cell surface of epididymal sperm while it passes through the caput epididymis leading to disappearance of TEX101 on spermatozoa; is essential to produce fertile spermatozoa. As to expression, detected in testis.

The protein localises to the cell membrane. Its subcellular location is the membrane raft. It is found in the cytoplasmic vesicle. It localises to the secretory vesicle. The protein resides in the acrosome. The protein localises to the secreted. Plays a role in fertilization by controlling binding of sperm to zona pellucida and migration of spermatozoa into the oviduct. May play a role in signal transduction and promote protein tyrosine phosphorylation. In Rattus norvegicus (Rat), this protein is Testis-expressed protein 101.